The following is a 207-amino-acid chain: N-(5'-phosphoribosyl)anthranilate isomerase (207 aa).

This sequence belongs to the TrpF family.

The catalysed reaction is N-(5-phospho-beta-D-ribosyl)anthranilate = 1-(2-carboxyphenylamino)-1-deoxy-D-ribulose 5-phosphate. The protein operates within amino-acid biosynthesis; L-tryptophan biosynthesis; L-tryptophan from chorismate: step 3/5. This is N-(5'-phosphoribosyl)anthranilate isomerase from Geotalea daltonii (strain DSM 22248 / JCM 15807 / FRC-32) (Geobacter daltonii).